We begin with the raw amino-acid sequence, 715 residues long: Methionine--tRNA ligase (715 aa).

The 'HIGH' region signature appears at 20–30 (PYANGKAHIGH). Zn(2+)-binding residues include Cys-151, Cys-154, Cys-163, and Cys-167. The 'KMSKS' region signature appears at 334 to 338 (KFSKT). Residue Lys-337 participates in ATP binding. Positions 559-593 (ANAKRNGVKGGEKEPSKSEGMGPSEASKASEKTVD) are disordered. The 103-residue stretch at 613–715 (DFAKLDIRVG…KEIKSGSRIR (103 aa)) folds into the tRNA-binding domain.

Belongs to the class-I aminoacyl-tRNA synthetase family. MetG type 1 subfamily. Homodimer. Zn(2+) serves as cofactor.

The protein localises to the cytoplasm. It catalyses the reaction tRNA(Met) + L-methionine + ATP = L-methionyl-tRNA(Met) + AMP + diphosphate. Its function is as follows. Is required not only for elongation of protein synthesis but also for the initiation of all mRNA translation through initiator tRNA(fMet) aminoacylation. The polypeptide is Methionine--tRNA ligase (Methanosarcina mazei (strain ATCC BAA-159 / DSM 3647 / Goe1 / Go1 / JCM 11833 / OCM 88) (Methanosarcina frisia)).